An 863-amino-acid chain; its full sequence is Bifunctional uridylyltransferase/uridylyl-removing enzyme (863 aa).

Residues 1–328 (MLFSPTLSSP…PSNQDTVIDQ (328 aa)) form a uridylyltransferase region. Positions 329–687 (LDDDFQLINQ…ISNRFSLGGT (359 aa)) are uridylyl-removing. The 123-residue stretch at 446 to 568 (VDEHTLRVML…VQNQVRLDYL (123 aa)) folds into the HD domain. ACT domains lie at 688–772 (EVFI…PNRQ) and 794–863 (QMEL…RNIG).

This sequence belongs to the GlnD family. Mg(2+) serves as cofactor.

It catalyses the reaction [protein-PII]-L-tyrosine + UTP = [protein-PII]-uridylyl-L-tyrosine + diphosphate. The catalysed reaction is [protein-PII]-uridylyl-L-tyrosine + H2O = [protein-PII]-L-tyrosine + UMP + H(+). Its activity is regulated as follows. Uridylyltransferase (UTase) activity is inhibited by glutamine, while glutamine activates uridylyl-removing (UR) activity. Its function is as follows. Modifies, by uridylylation and deuridylylation, the PII regulatory proteins (GlnB and homologs), in response to the nitrogen status of the cell that GlnD senses through the glutamine level. Under low glutamine levels, catalyzes the conversion of the PII proteins and UTP to PII-UMP and PPi, while under higher glutamine levels, GlnD hydrolyzes PII-UMP to PII and UMP (deuridylylation). Thus, controls uridylylation state and activity of the PII proteins, and plays an important role in the regulation of nitrogen assimilation and metabolism. The chain is Bifunctional uridylyltransferase/uridylyl-removing enzyme from Haemophilus influenzae (strain 86-028NP).